The chain runs to 803 residues: Protein translocase subunit SecA (803 aa).

ATP contacts are provided by residues Q100, 118–122 (GEGKT), and D508.

It belongs to the SecA family. Monomer and homodimer. Part of the essential Sec protein translocation apparatus which comprises SecA, SecYEG and auxiliary proteins SecDF. Other proteins may also be involved.

It is found in the cell membrane. The protein resides in the cytoplasm. It catalyses the reaction ATP + H2O + cellular proteinSide 1 = ADP + phosphate + cellular proteinSide 2.. In terms of biological role, part of the Sec protein translocase complex. Interacts with the SecYEG preprotein conducting channel. Has a central role in coupling the hydrolysis of ATP to the transfer of proteins into and across the cell membrane, serving as an ATP-driven molecular motor driving the stepwise translocation of polypeptide chains across the membrane. The sequence is that of Protein translocase subunit SecA from Leuconostoc mesenteroides subsp. mesenteroides (strain ATCC 8293 / DSM 20343 / BCRC 11652 / CCM 1803 / JCM 6124 / NCDO 523 / NBRC 100496 / NCIMB 8023 / NCTC 12954 / NRRL B-1118 / 37Y).